Consider the following 356-residue polypeptide: S-adenosylmethionine:tRNA ribosyltransferase-isomerase (356 aa).

This sequence belongs to the QueA family. In terms of assembly, monomer.

It localises to the cytoplasm. The catalysed reaction is 7-aminomethyl-7-carbaguanosine(34) in tRNA + S-adenosyl-L-methionine = epoxyqueuosine(34) in tRNA + adenine + L-methionine + 2 H(+). It functions in the pathway tRNA modification; tRNA-queuosine biosynthesis. Transfers and isomerizes the ribose moiety from AdoMet to the 7-aminomethyl group of 7-deazaguanine (preQ1-tRNA) to give epoxyqueuosine (oQ-tRNA). This Escherichia coli O1:K1 / APEC protein is S-adenosylmethionine:tRNA ribosyltransferase-isomerase.